We begin with the raw amino-acid sequence, 821 residues long: Protein SCAR1 (821 aa).

3 disordered regions span residues 168–189 (KRAS…QRGR), 205–289 (TCTS…RGSS), and 577–625 (TSLP…RESK). Residues 206-225 (CTSLSFSGRTSTSKTASTIE) show a composition bias toward polar residues. Basic and acidic residues predominate over residues 226-250 (IESKSDLQEHRSFSFDSRSGGEKPK). Residues 252–265 (VSSSSRFTPGSRTI) show a composition bias toward polar residues. Positions 592 to 612 (SSSYISDNSDNDNRSVSMSEQ) are enriched in low complexity. Positions 756–774 (EAGDFLHQIRTKQFNLRRV) constitute a WH2 domain. The disordered stretch occupies residues 802 to 821 (QAVASDDGEGESDTWSDSDT). The segment covering 807-821 (DDGEGESDTWSDSDT) has biased composition (acidic residues).

It belongs to the SCAR/WAVE family. Binds BRK1 and actin. Interacts with SPK1, ABI1 and ABI2. In terms of tissue distribution, expressed in expanding cotyledons, expanding leaves and expanding siliques containing developing embryos. Detected in unopened flower buds and in the expanding tip region of roots. Reduced expression in mature leaves and mature cotyledons.

It localises to the cytoplasm. The protein resides in the cytoskeleton. Functionally, involved in regulation of actin and microtubule organization. Part of a WAVE complex that activates the Arp2/3 complex. Regulates trichome branch positioning and expansion. In Arabidopsis thaliana (Mouse-ear cress), this protein is Protein SCAR1 (SCAR1).